The sequence spans 364 residues: Sorbitol dehydrogenase (364 aa).

C54 provides a ligand contact to Zn(2+). Y60 serves as a coordination point for substrate. Positions 79 and 80 each coordinate Zn(2+). Residue E165 participates in substrate binding. NAD(+) contacts are provided by residues I193, D213, R218, 284 to 286 (VGM), and 308 to 310 (VFR). Residues R310 and Y311 each coordinate substrate.

This sequence belongs to the zinc-containing alcohol dehydrogenase family. As to quaternary structure, homotetramer. Zn(2+) serves as cofactor. Mostly expressed in dry seeds and leaves, and, to a lower extent, in roots, stems, flowers and siliques (at protein level).

It is found in the mitochondrion membrane. Its subcellular location is the cell membrane. It localises to the cytoplasm. The protein resides in the cytosol. It carries out the reaction keto-D-fructose + NADH + H(+) = D-sorbitol + NAD(+). It catalyses the reaction ribitol + NAD(+) = D-ribulose + NADH + H(+). The enzyme catalyses xylitol + NAD(+) = D-xylulose + NADH + H(+). Its function is as follows. Polyol dehydrogenase that catalyzes the NAD(+)-dependent oxidation of various sugar alcohols. Is mostly active with D-sorbitol (D-glucitol), ribitol and xylitol as substrates, leading to the C2-oxidized products D-fructose, D-ribulose and D-xylulose, respectively. To a lesser extent, can also oxidize arabitol, mannitol, lactitol and maltitol in vitro. Is required for sorbitol metabolism. Cannot use NADP(+) as the electron acceptor. The sequence is that of Sorbitol dehydrogenase (SDH) from Arabidopsis thaliana (Mouse-ear cress).